A 94-amino-acid chain; its full sequence is Putative pterin-4-alpha-carbinolamine dehydratase (94 aa).

This sequence belongs to the pterin-4-alpha-carbinolamine dehydratase family.

It carries out the reaction (4aS,6R)-4a-hydroxy-L-erythro-5,6,7,8-tetrahydrobiopterin = (6R)-L-erythro-6,7-dihydrobiopterin + H2O. The sequence is that of Putative pterin-4-alpha-carbinolamine dehydratase from Mycolicibacterium smegmatis (strain ATCC 700084 / mc(2)155) (Mycobacterium smegmatis).